We begin with the raw amino-acid sequence, 333 residues long: Glyceraldehyde-3-phosphate dehydrogenase (333 aa).

N-acetylserine is present on Ser-1. Residues Arg-10–Ile-11, Asp-31, and Met-76 contribute to the NAD(+) site. D-glyceraldehyde 3-phosphate-binding positions include Ser-147–Thr-149, Thr-178, Thr-207–Gly-208, and Arg-230. The Nucleophile role is filled by Cys-148. An NAD(+)-binding site is contributed by Asn-312.

The protein belongs to the glyceraldehyde-3-phosphate dehydrogenase family. Homotetramer.

It is found in the cytoplasm. The catalysed reaction is D-glyceraldehyde 3-phosphate + phosphate + NAD(+) = (2R)-3-phospho-glyceroyl phosphate + NADH + H(+). It participates in carbohydrate degradation; glycolysis; pyruvate from D-glyceraldehyde 3-phosphate: step 1/5. This is Glyceraldehyde-3-phosphate dehydrogenase from Panulirus versicolor (Painted spiny lobster).